The following is a 385-amino-acid chain: uncharacterized protein (385 aa).

Transmembrane regions (helical) follow at residues 12 to 32, 50 to 70, 90 to 110, 132 to 152, 195 to 215, 233 to 253, 272 to 292, 312 to 332, and 335 to 355; these read GVAILGILLLNISAFGLPKAA, WAFLDLIGQVKFLTLFALLFG, LLVLLGFIHGLLFWDGDILLA, FNTGVMLYLVGLGVLLLLGLI, LALGAQYGWQLAGMMLIGAAL, TGFVLVAIGVTINLPAIALQW, LSAPFQAIGYASLFYGFWPQL, YLLQTLICTTLFYHLGLFMHF, and LELLAFVIPVWLANILFSVIW.

The protein to B.subtilis YxaH and YrkO.

The protein resides in the cell membrane. Its function is as follows. Involved in transport. This is an uncharacterized protein from Escherichia coli (strain K12).